The chain runs to 361 residues: Serine/threonine-protein kinase SRK2I (361 aa).

Residues 22-278 (YDFVKDIGSG…IPEIKTHSWF (257 aa)) enclose the Protein kinase domain. Residues 28–36 (IGSGNFGVA) and K51 contribute to the ATP site. The Proton acceptor role is filled by D141.

This sequence belongs to the protein kinase superfamily. Ser/Thr protein kinase family. In terms of assembly, interacts with ABI1. Interacts with I-2 and TOPP1. Interacts with FREE1 (via C-terminus). In terms of processing, autophosphorylated in vitro. In terms of tissue distribution, expressed at low levels in seeds, seedlings, roots (especially in tips), stems, leaves, shoots, flowers and siliques.

It carries out the reaction L-seryl-[protein] + ATP = O-phospho-L-seryl-[protein] + ADP + H(+). The enzyme catalyses L-threonyl-[protein] + ATP = O-phospho-L-threonyl-[protein] + ADP + H(+). Its activity is regulated as follows. Activated by autophosphorylation of its activation loop. In terms of biological role, together with SRK2D, key component and activator of the abscisic acid (ABA) signaling pathway that regulates numerous ABA responses, such as seed germination, Pro accumulation, root growth inhibition, dormancy and seedling growth, and, to a lesser extent, stomatal closure. In response to ABA, phosphorylates the ESCRT-I complex component FREE1, which is required for ABA-induced FREE1 nuclear import. The sequence is that of Serine/threonine-protein kinase SRK2I (SRK2I) from Arabidopsis thaliana (Mouse-ear cress).